Here is a 466-residue protein sequence, read N- to C-terminus: CBL-interacting protein kinase 20 (466 aa).

Positions Tyr-12–Phe-276 constitute a Protein kinase domain. ATP is bound by residues Leu-18–Val-26 and Lys-41. Residue Asp-139 is the Proton acceptor of the active site. The segment at Asp-162–Glu-191 is activation loop. Residues Lys-297–Cys-329 form the NAF domain. The interval Thr-337–Val-366 is PPI. Residues Ala-446–Asn-466 are disordered.

It belongs to the protein kinase superfamily. CAMK Ser/Thr protein kinase family. SNF1 subfamily. Requires Mn(2+) as cofactor.

It carries out the reaction L-seryl-[protein] + ATP = O-phospho-L-seryl-[protein] + ADP + H(+). The enzyme catalyses L-threonyl-[protein] + ATP = O-phospho-L-threonyl-[protein] + ADP + H(+). In terms of biological role, CIPK serine-threonine protein kinases interact with CBL proteins. Binding of a CBL protein to the regulatory NAF domain of CIPK protein lead to the activation of the kinase in a calcium-dependent manner. The chain is CBL-interacting protein kinase 20 (CIPK20) from Oryza sativa subsp. japonica (Rice).